We begin with the raw amino-acid sequence, 477 residues long: 3-sulfolactaldehyde dehydrogenase (477 aa).

Residue 232 to 233 (GS) participates in NAD(+) binding. Glu-252 serves as the catalytic Proton acceptor. Leu-253 contributes to the NAD(+) binding site. Cys-286 acts as the Nucleophile in catalysis. Residue Glu-380 coordinates NAD(+).

Belongs to the aldehyde dehydrogenase family.

The enzyme catalyses (2S)-3-sulfolactaldehyde + NAD(+) + H2O = (2S)-3-sulfolactate + NADH + 2 H(+). Part of the sulfo-TAL (or sulfo-SFT) pathway, a D-sulfoquinovose degradation pathway that produces sulfolactate (SL). Catalyzes the oxidation of 3-sulfolactaldehyde (SLA) to sulfolactate (SL). In Priestia aryabhattai (Bacillus aryabhattai), this protein is 3-sulfolactaldehyde dehydrogenase.